The primary structure comprises 332 residues: UDP-3-O-acylglucosamine N-acyltransferase (332 aa).

The active-site Proton acceptor is histidine 231.

The protein belongs to the transferase hexapeptide repeat family. LpxD subfamily. As to quaternary structure, homotrimer.

The enzyme catalyses a UDP-3-O-[(3R)-3-hydroxyacyl]-alpha-D-glucosamine + a (3R)-hydroxyacyl-[ACP] = a UDP-2-N,3-O-bis[(3R)-3-hydroxyacyl]-alpha-D-glucosamine + holo-[ACP] + H(+). It participates in bacterial outer membrane biogenesis; LPS lipid A biosynthesis. Its function is as follows. Catalyzes the N-acylation of UDP-3-O-acylglucosamine using 3-hydroxyacyl-ACP as the acyl donor. Is involved in the biosynthesis of lipid A, a phosphorylated glycolipid that anchors the lipopolysaccharide to the outer membrane of the cell. The chain is UDP-3-O-acylglucosamine N-acyltransferase from Ruthia magnifica subsp. Calyptogena magnifica.